A 427-amino-acid chain; its full sequence is Gamma-glutamyl phosphate reductase (427 aa).

Belongs to the gamma-glutamyl phosphate reductase family.

The protein localises to the cytoplasm. The enzyme catalyses L-glutamate 5-semialdehyde + phosphate + NADP(+) = L-glutamyl 5-phosphate + NADPH + H(+). The protein operates within amino-acid biosynthesis; L-proline biosynthesis; L-glutamate 5-semialdehyde from L-glutamate: step 2/2. In terms of biological role, catalyzes the NADPH-dependent reduction of L-glutamate 5-phosphate into L-glutamate 5-semialdehyde and phosphate. The product spontaneously undergoes cyclization to form 1-pyrroline-5-carboxylate. The protein is Gamma-glutamyl phosphate reductase of Rhizobium meliloti (strain 1021) (Ensifer meliloti).